Here is a 128-residue protein sequence, read N- to C-terminus: Cystatin-1 (128 aa).

The N-terminal stretch at 1–17 is a signal peptide; the sequence is MIRSAVVLTVLVGVCLA. Positions 20-128 constitute a Cystatin domain; the sequence is GFVGGWSQVD…TKEVTSFECN (109 aa). 2 disulfide bridges follow: cysteine 84–cysteine 96 and cysteine 107–cysteine 127.

Belongs to the cystatin family. In terms of tissue distribution, mainly expressed in gut.

The protein localises to the secreted. Functionally, inhibitor of cysteine proteinases. Strongly inhibits mammalian cathepsin B and H, and moderately inhibits mammalian cathepsin C. Also inhibits endogenous cathepsin B-like but not cathepsin C-like proteinases. May have a protective role against undesired digestion of a stored blood meal by endogenous peptidases. The protein is Cystatin-1 of Ornithodoros moubata (Soft tick).